The chain runs to 743 residues: Keratin, type I cytoskeletal 9 (743 aa).

Over residues M1–S16 the composition is skewed to low complexity. Positions M1–G46 are disordered. The interval M1–N130 is head. Residues S14 and S16 each carry the phosphoserine modification. Residues C17–G28 are compositionally biased toward gly residues. Positions S29–R39 are enriched in low complexity. Phosphoserine occurs at positions 55 and 155. The interval E131–W166 is coil 1A. The 313-residue stretch at E131–F443 folds into the IF rod domain. The interval Y167–T185 is linker 1. Residues I186 to L277 are coil 1B. Residues T278–V300 are linker 12. The coil 2 stretch occupies residues L301–G439. Disordered stretches follow at residues Q440 to G468 and G501 to Y743. The segment at Q440–S709 is tail. 2 stretches are compositionally biased toward gly residues: residues G449–G468 and G501–N717.

Belongs to the intermediate filament family. In terms of assembly, heterotetramer of two type I and two type II keratins. In terms of tissue distribution, expressed in footpad epidermis and testis (at protein level).

In terms of biological role, may serve an important special function either in the mature palmar and plantar skin tissue or in the morphogenetic program of the formation of these tissues. Plays a role in keratin filament assembly. Plays an essential role in the correct development of sperm. This Mus musculus (Mouse) protein is Keratin, type I cytoskeletal 9.